The sequence spans 144 residues: Large ribosomal subunit protein uL15 (144 aa).

The segment at 1 to 57 (MELNNIKPADGAKKDKRRVGRGIGSGLGKTAGRGHKGQKSRAGGFHKVGFEGGQMPM) is disordered. Over residues 21-31 (RGIGSGLGKTA) the composition is skewed to gly residues.

This sequence belongs to the universal ribosomal protein uL15 family. As to quaternary structure, part of the 50S ribosomal subunit.

Its function is as follows. Binds to the 23S rRNA. In Thiobacillus denitrificans (strain ATCC 25259 / T1), this protein is Large ribosomal subunit protein uL15.